The following is a 11103-amino-acid chain: Colossin-A (11103 aa).

Residues 1–35 form the signal peptide; sequence MGTIKTKFKNNYLKNSYLFIIYIILFNLVIGIANS. Residues Asn95, Asn120, Asn137, and Asn198 are each glycosylated (N-linked (GlcNAc...) asparagine). The stretch at 273–324 is one Kelch 1 repeat; the sequence is NLFAVGNYVFFDVNRDGVHETTELFAPNVKVELYDAISSTRLIASTFTDLNG. A CNA-B 1 domain is found at 298–359; that stretch reads APNVKVELYD…SNGPDNVINA (62 aa). 3 N-linked (GlcNAc...) asparagine glycosylation sites follow: Asn372, Asn386, and Asn422. Positions 423-469 constitute a CNA-B 2 domain; it reads LSGITVQLTTPSHVVLKTAQTDYAGNYVFDDLSEGVYSVHFILPENY. Asn493 carries N-linked (GlcNAc...) asparagine glycosylation. 6 CNA-B domains span residues 551–599, 676–745, 803–871, 931–999, 1057–1095, and 1170–1231; these read LPGV…PDGY, VANV…INLT, APFV…FTLN, AEGV…IDLS, LPNI…EGDY, and LSNT…FNSS. Asn678 carries an N-linked (GlcNAc...) asparagine glycan. 3 N-linked (GlcNAc...) asparagine glycosylation sites follow: Asn1059, Asn1229, and Asn1239. A CNA-B 9 domain is found at 1277–1314; the sequence is ISNIPLSLISQKTNQIISSVVTDSNGKYQFEDVPPGDY. An N-linked (GlcNAc...) asparagine glycan is attached at Asn1329. CNA-B domains follow at residues 1391 to 1458, 1494 to 1530, 1602 to 1651, 1708 to 1779, 1824 to 1891, 1927 to 1963, 2035 to 2086, and 2141 to 2177; these read SDVS…FKLT, LPGV…PGDY, LPGV…YKQV, LSDI…VTVK, LPGV…QVAQ, and VEGI…PGDY. A glycan (N-linked (GlcNAc...) asparagine) is linked at Asn1613. A disordered region spans residues 1716–1740; sequence TDKDGNEISNTKSGPDGKYQFEDVP. Asn1759 and Asn1772 each carry an N-linked (GlcNAc...) asparagine glycan. Asn2046 carries an N-linked (GlcNAc...) asparagine glycan. 2 N-linked (GlcNAc...) asparagine glycosylation sites follow: Asn2192 and Asn2311. CNA-B domains are found at residues 2254 to 2321, 2357 to 2402, 2465 to 2514, 2571 to 2640, 2687 to 2754, 2790 to 2835, 2898 to 2947, and 3004 to 3040; these read SDVS…FKLT, LPGV…TPIG, LPGV…YKQV, LSDI…NFVT, and LEGI…PGDY. Residue Asn2476 is glycosylated (N-linked (GlcNAc...) asparagine). Residues 2580–2603 are disordered; the sequence is DKDGNEITNTKSGPDGKYQFEDVP. Asn2622 is a glycosylation site (N-linked (GlcNAc...) asparagine). N-linked (GlcNAc...) asparagine glycans are attached at residues Asn2801 and Asn2909. N-linked (GlcNAc...) asparagine glycans are attached at residues Asn3048, Asn3055, and Asn3118. CNA-B domains follow at residues 3117–3184, 3220–3256, 3328–3364, and 3434–3470; these read SNVS…FKLT, LPGV…PGDY, LPGV…PGSY, and VEGI…PGDY. A glycan (N-linked (GlcNAc...) asparagine) is linked at Asn3339. An N-linked (GlcNAc...) asparagine glycan is attached at Asn3485. Residues 3503–3549 form a Kelch 2 repeat; sequence SCFAVSGPLDNQNLGLSLFYEIGTMVWIDSNNNGKFEQPSDVLKSDV. CNA-B domains are found at residues 3547–3614, 3650–3686, and 3758–3809; these read SDVS…FKLT, LPGV…PGDY, and LPGV…QVAQ. 2 N-linked (GlcNAc...) asparagine glycosylation sites follow: Asn3769 and Asn3827. One can recognise a CNA-B 33 domain in the interval 3864–3900; the sequence is LSDITIRLTDKDGKVIQSTTSGPDGKYQFEDVPPGDY. N-linked (GlcNAc...) asparagine glycosylation occurs at Asn3915. CNA-B domains follow at residues 3980–4047, 4083–4128, 4191–4240, 4297–4378, 4425–4492, 4528–4573, 4636–4685, and 4742–4778; these read SDVS…FKLT, LPGV…TPIG, LPGV…YKQV, LSDI…NFVT, and VEGI…PGDY. A glycan (N-linked (GlcNAc...) asparagine) is linked at Asn4202. Positions 4286-4341 are disordered; that stretch reads NTGKQTDDSPPLSDITIRLTDKDGNEITKTKSRPDGNENSNTKSGPDGKYQFEDVP. Residues 4304–4321 show a composition bias toward basic and acidic residues; sequence LTDKDGNEITKTKSRPDG. Asn4360 is a glycosylation site (N-linked (GlcNAc...) asparagine). Residue Asn4647 is glycosylated (N-linked (GlcNAc...) asparagine). Residues Asn4792 and Asn4918 are each glycosylated (N-linked (GlcNAc...) asparagine). 4 consecutive CNA-B domains span residues 4865-4928, 4964-5009, 5072-5123, and 5178-5214; these read ITLT…FKLT, LPGV…TPIG, LPGV…QVAQ, and LEGI…PGDY. N-linked (GlcNAc...) asparagine glycosylation is present at Asn5083. Residues Asn5229, Asn5292, and Asn5348 are each glycosylated (N-linked (GlcNAc...) asparagine). Residues 5247–5293 form a Kelch 3 repeat; the sequence is SCFAVSGPLDNQNLGLSPFYEIGTIVWIDSNNNDKFEQPSDIGKSNV. CNA-B domains are found at residues 5291 to 5358, 5394 to 5430, 5502 to 5553, and 5608 to 5644; these read SNVS…FKLT, LPGV…PGDY, LPGV…QVAQ, and LSDI…PGDY. An N-linked (GlcNAc...) asparagine glycan is attached at Asn5513. Asn5659 carries an N-linked (GlcNAc...) asparagine glycan. CNA-B domains are found at residues 5724-5791, 5827-5872, 5935-5984, and 6041-6077; these read SDVS…FKLT, LPGV…TPIG, LPGV…YKQV, and VEGI…PGDY. N-linked (GlcNAc...) asparagine glycosylation occurs at Asn5946. Asn6092 and Asn6155 each carry an N-linked (GlcNAc...) asparagine glycan. 4 consecutive CNA-B domains span residues 6154–6221, 6257–6302, 6365–6416, and 6471–6507; these read SNVS…FKLT, LPGV…TPIG, LPGV…QDAQ, and LSDI…PGDY. Asn6376 is a glycosylation site (N-linked (GlcNAc...) asparagine). N-linked (GlcNAc...) asparagine glycans are attached at residues Asn6522 and Asn6535. 4 consecutive CNA-B domains span residues 6587–6654, 6690–6726, 6798–6849, and 6904–6940; these read SDVS…FKLT, LEGV…PGDY, LPGV…QVNQ, and VEGI…PGDY. 3 N-linked (GlcNAc...) asparagine glycosylation sites follow: Asn6701, Asn6809, and Asn6848. N-linked (GlcNAc...) asparagine glycans are attached at residues Asn6954, Asn7080, Asn7137, and Asn7245. CNA-B domains lie at 7023–7090, 7126–7171, 7234–7285, 7340–7411, 7456–7523, 7559–7596, 7668–7719, and 7774–7810; these read SDVS…FKLT, LAGV…TPIG, LPGV…QDAQ, LSDI…VTVK, LPGV…PGDY, LTGV…QVAQ, and VEGI…PGDY. The disordered stretch occupies residues 7351-7372; that stretch reads DGNEITNTKSGPDGKYQFEDVP. Residues Asn7391 and Asn7404 are each glycosylated (N-linked (GlcNAc...) asparagine). Asn7679 carries an N-linked (GlcNAc...) asparagine glycan. Residues Asn7825 and Asn7837 are each glycosylated (N-linked (GlcNAc...) asparagine). CNA-B domains follow at residues 7887–7954, 7990–8035, 8098–8149, 8204–8265, 8313–8374, 8420–8456, and 8528–8587; these read SDVS…FKLT, LPGV…TPIG, LPGV…QVAQ, IPNI…FSLS, VGKS…VVDQ, LPGV…QGDY, and LPGI…PFDS. 2 N-linked (GlcNAc...) asparagine glycosylation sites follow: Asn8109 and Asn8255. 57 N-linked (GlcNAc...) asparagine glycosylation sites follow: Asn8441, Asn8539, Asn8629, Asn8636, Asn8655, Asn8693, Asn8753, Asn8811, Asn8896, Asn8930, Asn8976, Asn9023, Asn9073, Asn9087, Asn9123, Asn9137, Asn9146, Asn9149, Asn9186, Asn9297, Asn9305, Asn9349, Asn9409, Asn9419, Asn9533, Asn9543, Asn9556, Asn9601, Asn9709, Asn9718, Asn9786, Asn9839, Asn9850, Asn9867, Asn9891, Asn9941, Asn9957, Asn9989, Asn10042, Asn10096, Asn10111, Asn10174, Asn10267, Asn10315, Asn10348, Asn10360, Asn10379, Asn10394, Asn10431, Asn10477, Asn10552, Asn10581, Asn10715, Asn10786, Asn10802, Asn10943, and Asn11018. The stretch at 8592–8638 is one Kelch 4 repeat; sequence CFDLLDKSITNANLGLIPLYNIGSDAWLDNLNNGVRRNDSLLVPNVT. The CNA-B 77 domain occupies 8634–8680; sequence VPNVTMSLYDNNGNLIETTITNSSGKYQFNDIQPGSYCVRATVPSNY. One can recognise a CNA-B 78 domain in the interval 8751–8810; sequence LPNVTVQLYDKVSGNILAATRSDDKGGYVVPNLLPSADYCVQFEVPPGYIVVVDSDDSVT. The 50-residue stretch at 8965-9014 folds into the CNA-B 79 domain; it reads LPGVSVSLFSPNGTSIANTITDENGKYAFKDQVPGSYCIKMIIPPHYQQV. A CNA-B 80 domain is found at 9071–9107; it reads VPNITMTLLDSQGKQINSTITNANGFYQFVDVAPGNY. In terms of domain architecture, CNA-B 81 spans 9185–9220; the sequence is ANVSLSLVNTGNSEIKTTTTNSQGKYSFGQLLAGNY. The CNA-B 82 domain maps to 9299-9332; that stretch reads TITLTPNNTALPTQTTTTDVNGNYRFDNLVVGNY. 2 consecutive CNA-B domains span residues 9407–9447 and 9531–9569; these read LVNI…VVQF and MANI…PGNY. In terms of domain architecture, CNA-B 85 spans 9659–9728; it reads VEGITVRIYD…ATGYISIDLS (70 aa). Residues 10044 to 10103 enclose the CNA-B 86 domain; the sequence is TLFNADGSTPNDIFGKPIQMAVTDVNGKYSIPNVPPGSYYMTVSIPPRYIISNFTTTGLV. One can recognise a CNA-B 87 domain in the interval 10172 to 10236; sequence LPNVTVLLLN…ITPTKLVSTS (65 aa). The CNA-B 88 domain occupies 10313-10370; it reads PGNFTVQLKSANQAVNGGLTTVPIGTVVATSPVAANGSFSIPNLQLGNYTLTLIPPSG.

It belongs to the serine-aspartate repeat-containing protein (SDr) family.

The protein localises to the secreted. This Dictyostelium discoideum (Social amoeba) protein is Colossin-A (colA).